A 341-amino-acid polypeptide reads, in one-letter code: Methionine import ATP-binding protein MetN 2 (341 aa).

Residues 2-241 (IEASELTKVY…PKAPLTQEFI (240 aa)) form the ABC transporter domain. 38 to 45 (GYSGAGKS) contributes to the ATP binding site.

Belongs to the ABC transporter superfamily. Methionine importer (TC 3.A.1.24) family. The complex is composed of two ATP-binding proteins (MetN), two transmembrane proteins (MetI) and a solute-binding protein (MetQ).

Its subcellular location is the cell membrane. The enzyme catalyses L-methionine(out) + ATP + H2O = L-methionine(in) + ADP + phosphate + H(+). It carries out the reaction D-methionine(out) + ATP + H2O = D-methionine(in) + ADP + phosphate + H(+). In terms of biological role, part of the ABC transporter complex MetNIQ involved in methionine import. Responsible for energy coupling to the transport system. This is Methionine import ATP-binding protein MetN 2 from Shouchella clausii (strain KSM-K16) (Alkalihalobacillus clausii).